Consider the following 333-residue polypeptide: NADH-quinone oxidoreductase subunit H (333 aa).

Helical transmembrane passes span 15 to 35 (LVIF…FVTY), 88 to 108 (FILA…TLPF), 117 to 137 (IGVG…GVVA), 159 to 179 (ISYE…TGSL), 191 to 211 (VWYI…AVAE), 250 to 270 (LFAM…PVMF), 273 to 293 (FIPG…VLIW), and 313 to 333 (VLFP…ELFF).

Belongs to the complex I subunit 1 family. As to quaternary structure, NDH-1 is composed of 14 different subunits. Subunits NuoA, H, J, K, L, M, N constitute the membrane sector of the complex.

The protein localises to the cell membrane. The enzyme catalyses a quinone + NADH + 5 H(+)(in) = a quinol + NAD(+) + 4 H(+)(out). NDH-1 shuttles electrons from NADH, via FMN and iron-sulfur (Fe-S) centers, to quinones in the respiratory chain. The immediate electron acceptor for the enzyme in this species is believed to be ubiquinone. Couples the redox reaction to proton translocation (for every two electrons transferred, four hydrogen ions are translocated across the cytoplasmic membrane), and thus conserves the redox energy in a proton gradient. This subunit may bind ubiquinone. The protein is NADH-quinone oxidoreductase subunit H of Geobacillus sp. (strain WCH70).